The sequence spans 121 residues: UPF0231 protein ESA_03214 (121 aa).

The protein belongs to the UPF0231 family.

The sequence is that of UPF0231 protein ESA_03214 from Cronobacter sakazakii (strain ATCC BAA-894) (Enterobacter sakazakii).